The following is a 357-amino-acid chain: Enoyl-[acyl-carrier-protein] reductase, mitochondrial (357 aa).

Residues 1 to 19 constitute a mitochondrion transit peptide; sequence MLRRGFLSRINAAQWSRQM. The Enoyl reductase (ER) domain maps to 36–352; the sequence is EVLQLVEDKL…FKGFTGKKYI (317 aa). Tyr74 functions as the Proton donor in the catalytic mechanism. NADP(+) contacts are provided by residues Asn147, 173–176, 196–198, 264–267, 289–291, Lys349, and Lys350; these read NSAV, RDR, YGGM, and FWM.

Belongs to the zinc-containing alcohol dehydrogenase family. Quinone oxidoreductase subfamily. Homodimer. As to expression, expressed in the central nervous system.

The protein localises to the mitochondrion. It catalyses the reaction a 2,3-saturated acyl-[ACP] + NADP(+) = a (2E)-enoyl-[ACP] + NADPH + H(+). In terms of biological role, catalyzes the NADPH-dependent reduction of trans-2-enoyl thioesters in mitochondrial fatty acid synthesis (fatty acid synthesis type II). Fatty acid chain elongation in mitochondria uses acyl carrier protein (ACP) as an acyl group carrier, but the enzyme accepts both ACP and CoA thioesters as substrates in vitro. Involved in iron homeostasis; affecting Fe-S cluster assembly and ceramide metabolism. Required for proper morphology and bioenergetic functions of mitochondria. Required for maintenance of neurons, including photoreceptor neurons. The chain is Enoyl-[acyl-carrier-protein] reductase, mitochondrial from Drosophila melanogaster (Fruit fly).